The following is a 395-amino-acid chain: Secreted aspartyl protease 1 (395 aa).

A signal peptide spans 1–20; it reads MQLSIQAIIGFVVAAGLAVA. Positions 21–88 are cleaved as a propeptide — removed in mature form; the sequence is SELPSPMTVN…HLLLDLIDKR (68 aa). The N-linked (GlcNAc...) asparagine glycan is linked to Asn41. The region spanning 105 to 391 is the Peptidase A1 domain; sequence WAGDVQFGQS…DMGKNRMGFA (287 aa). Catalysis depends on residues Asp121 and Asp283. Cys321 and Cys352 are disulfide-bonded.

It belongs to the peptidase A1 family.

Its subcellular location is the secreted. With respect to regulation, inhibited by pepstatin A. In terms of biological role, dominant secreted aspartyl protease that has a clear preference for aromatic residues in the P1' position directly adjacent to the cleavage site and, in particular, Trp. In addition, it generally cleaves peptides containing Lys, Arg, Phe, Tyr, or Nle (norleucine) in the P1 position, Nle and Glu at P2, and Arg and Val at P2'. Has important roles in facilitating the interaction of the yeast with the external environment. Is able to rapidly hydrolyze Staphylococcus aureus protein A, an important S.aureus virulence factor involved in immune evasion and biofilm formation. Shows anti-biofilm properties and thus plays a role in inter-kingdom interactions, beneficial for host skin health. The protein is Secreted aspartyl protease 1 of Malassezia globosa (strain ATCC MYA-4612 / CBS 7966) (Dandruff-associated fungus).